We begin with the raw amino-acid sequence, 356 residues long: WAT1-related protein At1g68170 (356 aa).

The next 10 membrane-spanning stretches (helical) occupy residues 4-24, 33-53, 65-85, 94-114, 125-145, 176-196, 210-230, 245-265, 273-293, and 298-318; these read ITAM…FKLA, VLVA…CFIF, LMLL…ILTI, TFTS…AALL, VGLA…VFIF, ISIL…LWFL, WNAT…ALCW, LLTI…VNAW, LFVS…GSFL, and LHLG…IVLW. 2 EamA domains span residues 14-142 and 191-317; these read TAGL…GALV and ISLW…YIVL.

This sequence belongs to the drug/metabolite transporter (DMT) superfamily. Plant drug/metabolite exporter (P-DME) (TC 2.A.7.4) family.

Its subcellular location is the membrane. The sequence is that of WAT1-related protein At1g68170 from Arabidopsis thaliana (Mouse-ear cress).